The primary structure comprises 341 residues: Phosphate acyltransferase (341 aa).

Belongs to the PlsX family. In terms of assembly, homodimer. Probably interacts with PlsY.

The protein localises to the cytoplasm. It carries out the reaction a fatty acyl-[ACP] + phosphate = an acyl phosphate + holo-[ACP]. It participates in lipid metabolism; phospholipid metabolism. Catalyzes the reversible formation of acyl-phosphate (acyl-PO(4)) from acyl-[acyl-carrier-protein] (acyl-ACP). This enzyme utilizes acyl-ACP as fatty acyl donor, but not acyl-CoA. The sequence is that of Phosphate acyltransferase from Aliivibrio fischeri (strain ATCC 700601 / ES114) (Vibrio fischeri).